The chain runs to 551 residues: Probable terpene synthase 8 (551 aa).

Mg(2+)-binding residues include Asp-307, Asp-311, and Glu-457. The DDXXD motif signature appears at 307 to 311; that stretch reads DDTYD.

This sequence belongs to the terpene synthase family. Mg(2+) is required as a cofactor.

In terms of biological role, probable sesquiterpene synthase. The chain is Probable terpene synthase 8 (TPS8) from Ricinus communis (Castor bean).